A 283-amino-acid chain; its full sequence is MTVQTSKNPQVDIAEDNAFFPSEYSLSQYTSPVSDLDGVDYPKPYRGKHKILVIAADERYLPTDNGKLFSTGNHPIETLLPLYHLHAAGFEFEVATISGLMTKFEYWAMPHKDEKVMPFFEQHKSLFRNPKKLADVVASLNADSEYAAIFVPGGHGALIGLPESQDVAAALQWAIKNDRFVISLCHGPAAFLALRHGDNPLNGYSICAFPDAADKQTPEIGYMPGHLTWYFGEELKKMGMNIINDDITGRVHKDRKVLTGDSPFAANALGKLAAQEMLAAYAG.

Zn(2+) is bound by residues histidine 86, glutamate 91, and histidine 123. Catalysis depends on cysteine 185, which acts as the Nucleophile.

It belongs to the peptidase C56 family. HchA subfamily. As to quaternary structure, homodimer.

It is found in the cytoplasm. The enzyme catalyses N(omega)-(1-hydroxy-2-oxopropyl)-L-arginyl-[protein] + H2O = lactate + L-arginyl-[protein] + H(+). It catalyses the reaction N(6)-(1-hydroxy-2-oxopropyl)-L-lysyl-[protein] + H2O = lactate + L-lysyl-[protein] + H(+). The catalysed reaction is S-(1-hydroxy-2-oxopropyl)-L-cysteinyl-[protein] + H2O = lactate + L-cysteinyl-[protein] + H(+). It carries out the reaction N(omega)-(1-hydroxy-2-oxoethyl)-L-arginyl-[protein] + H2O = L-arginyl-[protein] + glycolate + H(+). The enzyme catalyses N(6)-(1-hydroxy-2-oxoethyl)-L-lysyl-[protein] + H2O = glycolate + L-lysyl-[protein] + H(+). It catalyses the reaction S-(1-hydroxy-2-oxoethyl)-L-cysteinyl-[protein] + H2O = glycolate + L-cysteinyl-[protein] + H(+). The catalysed reaction is N(2)-(1-hydroxy-2-oxopropyl)-dGTP + H2O = lactate + dGTP + H(+). It carries out the reaction N(2)-(1-hydroxy-2-oxopropyl)-GTP + H2O = lactate + GTP + H(+). The enzyme catalyses N(2)-(1-hydroxy-2-oxopropyl)-GDP + H2O = lactate + GDP + H(+). It catalyses the reaction N(2)-(1-hydroxy-2-oxopropyl)-GMP + H2O = lactate + GMP + H(+). The catalysed reaction is N(2)-(1-hydroxy-2-oxoethyl)-dGTP + H2O = dGTP + glycolate + H(+). It carries out the reaction N(2)-(1-hydroxy-2-oxoethyl)-GTP + H2O = glycolate + GTP + H(+). The enzyme catalyses N(2)-(1-hydroxy-2-oxoethyl)-GDP + H2O = glycolate + GDP + H(+). It catalyses the reaction N(2)-(1-hydroxy-2-oxoethyl)-GMP + H2O = glycolate + GMP + H(+). The catalysed reaction is an N(2)-(1-hydroxy-2-oxopropyl)-guanosine in RNA + H2O = a guanosine in RNA + lactate + H(+). It carries out the reaction an N(2)-(1-hydroxy-2-oxopropyl)-2'-deoxyguanosine in DNA + H2O = a 2'-deoxyguanosine in DNA + lactate + H(+). The enzyme catalyses an N(2)-(1-hydroxy-2-oxoethyl)-guanosine in RNA + H2O = a guanosine in RNA + glycolate + H(+). It catalyses the reaction an N(2)-(1-hydroxy-2-oxoethyl)-2'-deoxyguanosine in DNA + H2O = a 2'-deoxyguanosine in DNA + glycolate + H(+). Its function is as follows. Protein and nucleotide deglycase that catalyzes the deglycation of the Maillard adducts formed between amino groups of proteins or nucleotides and reactive carbonyl groups of glyoxals. Thus, functions as a protein deglycase that repairs methylglyoxal- and glyoxal-glycated proteins, and releases repaired proteins and lactate or glycolate, respectively. Deglycates cysteine, arginine and lysine residues in proteins, and thus reactivates these proteins by reversing glycation by glyoxals. Acts on early glycation intermediates (hemithioacetals and aminocarbinols), preventing the formation of Schiff bases and advanced glycation endproducts (AGE). Also functions as a nucleotide deglycase able to repair glycated guanine in the free nucleotide pool (GTP, GDP, GMP, dGTP) and in DNA and RNA. Is thus involved in a major nucleotide repair system named guanine glycation repair (GG repair), dedicated to reversing methylglyoxal and glyoxal damage via nucleotide sanitization and direct nucleic acid repair. Plays an important role in protecting cells from carbonyl stress. The polypeptide is Protein/nucleic acid deglycase HchA (Escherichia coli O81 (strain ED1a)).